Reading from the N-terminus, the 418-residue chain is MSVSEANGTETIKPPMNGNPYGPNPSDFLSRVNNFSIIESTLREGEQFANAFFDTEKKIQIAKALDNFGVDYIELTSPVASEQSRQDCEAICKLGLKCKILTHIRCHMDDARVAVETGVDGVDVVIGTSQYLRKYSHGKDMTYIIDSATEVINFVKSKGIEVRFSSEDSFRSDLVDLLSLYKAVDKIGVNRVGIADTVGCATPRQVYDLIRTLRGVVSCDIECHFHNDTGMAIANAYCALEAGATHIDTSILGIGERNGITPLGALLARMYVTDREYITHKYKLNQLRELENLVADAVEVQIPFNNYITGMCAFTHKAGIHAKAILANPSTYEILKPEDFGMSRYVHVGSRLTGWNAIKSRAEQLNLHLTDAQAKELTVRIKKLADVRTLAMDDVDRVLREYHADLSDADRITKEASA.

Residues 1 to 10 (MSVSEANGTE) are compositionally biased toward polar residues. A disordered region spans residues 1–25 (MSVSEANGTETIKPPMNGNPYGPNP). Positions 14-25 (PPMNGNPYGPNP) are enriched in low complexity. A Pyruvate carboxyltransferase domain is found at 35 to 288 (FSIIESTLRE…THKYKLNQLR (254 aa)). Arg43, Glu44, and His103 together coordinate 2-oxoglutarate. Glu44 serves as a coordination point for L-lysine. Glu44 is a Zn(2+) binding site. Asp123 contributes to the L-lysine binding site. Residues Arg163, Ser165, Thr197, His224, and His226 each coordinate 2-oxoglutarate. Residue Thr197 coordinates L-lysine. His224 and His226 together coordinate Zn(2+). The active-site Proton acceptor is His321.

Belongs to the alpha-IPM synthase/homocitrate synthase family. Homocitrate synthase LYS20/LYS21 subfamily. It depends on Mg(2+) as a cofactor. Mn(2+) serves as cofactor. Zn(2+) is required as a cofactor. The cofactor is Co(2+).

It localises to the mitochondrion. The enzyme catalyses acetyl-CoA + 2-oxoglutarate + H2O = (2R)-homocitrate + CoA + H(+). It participates in amino-acid biosynthesis; L-lysine biosynthesis via AAA pathway; L-alpha-aminoadipate from 2-oxoglutarate: step 1/5. The activity is controled by feedback inhibition by L-lysine, the final product of the pathway that acts as a competitive inhibitor of 2-oxoglutarate. Catalyzes the aldol-type condensation of 2-oxoglutarate with acetyl-CoA to yield homocitrate, the first step of the alpha-aminoadipate (AAA) lysine biosynthesis pathway. In Schizosaccharomyces pombe (strain 972 / ATCC 24843) (Fission yeast), this protein is Homocitrate synthase, mitochondrial.